The primary structure comprises 80 residues: Translation initiation factor IF-1 (80 aa).

The S1-like domain maps to 6–80 (EKKKKDESDS…TSRGRIVYRR (75 aa)).

The protein belongs to the IF-1 family. Component of the 30S ribosomal translation pre-initiation complex which assembles on the 30S ribosome in the order IF-2 and IF-3, IF-1 and N-formylmethionyl-tRNA(fMet); mRNA recruitment can occur at any time during PIC assembly.

Its subcellular location is the cytoplasm. In terms of biological role, one of the essential components for the initiation of protein synthesis. Stabilizes the binding of IF-2 and IF-3 on the 30S subunit to which N-formylmethionyl-tRNA(fMet) subsequently binds. Helps modulate mRNA selection, yielding the 30S pre-initiation complex (PIC). Upon addition of the 50S ribosomal subunit IF-1, IF-2 and IF-3 are released leaving the mature 70S translation initiation complex. This Deinococcus radiodurans (strain ATCC 13939 / DSM 20539 / JCM 16871 / CCUG 27074 / LMG 4051 / NBRC 15346 / NCIMB 9279 / VKM B-1422 / R1) protein is Translation initiation factor IF-1.